The primary structure comprises 26 residues: Fumarylacetoacetate hydrolase domain-containing protein 2A (26 aa).

The protein belongs to the FAH family. Requires Ca(2+) as cofactor. It depends on Mg(2+) as a cofactor.

May have hydrolase activity. The chain is Fumarylacetoacetate hydrolase domain-containing protein 2A from Mesocricetus auratus (Golden hamster).